The primary structure comprises 431 residues: Glutamate--tRNA ligase 2 (431 aa).

The 'HIGH' region motif lies at 6 to 16; that stretch reads PSPTGDMHIGN. The 'KMSKS' region signature appears at 235–239; the sequence is KMSKR. Lys238 is an ATP binding site.

The protein belongs to the class-I aminoacyl-tRNA synthetase family. Glutamate--tRNA ligase type 1 subfamily. As to quaternary structure, monomer.

The protein resides in the cytoplasm. It catalyses the reaction tRNA(Glu) + L-glutamate + ATP = L-glutamyl-tRNA(Glu) + AMP + diphosphate. In terms of biological role, catalyzes the attachment of glutamate to tRNA(Glu) in a two-step reaction: glutamate is first activated by ATP to form Glu-AMP and then transferred to the acceptor end of tRNA(Glu). In Campylobacter jejuni subsp. doylei (strain ATCC BAA-1458 / RM4099 / 269.97), this protein is Glutamate--tRNA ligase 2.